A 71-amino-acid chain; its full sequence is Gas vesicle protein A (71 aa).

Positions 12-22 (LAEVIDRILDK) are alpha helix 1. A beta-strand 1 region spans residues 26-34 (VDAWVRVSL). The segment at 35 to 37 (VGI) is beta turn. The interval 38-46 (ELLAIEARI) is beta-strand 2. Residues 51-70 (VETYLKYAEAVGLTQSAAVP) form an alpha helix 2 region.

The protein belongs to the gas vesicle GvpA family. As to quaternary structure, the gas vesicle shell is 2 nm thick and consists of a single layer of this protein. It forms helical ribs nearly perpendicular to the long axis of the vesicle.

It localises to the gas vesicle shell. Functionally, gas vesicles are hollow, gas filled proteinaceous nanostructures found in some microorganisms. During planktonic growth they allow positioning of the organism at a favorable depth for light or nutrient acquisition. GvpA forms the protein shell. This is Gas vesicle protein A from Microchaete diplosiphon (Fremyella diplosiphon).